The sequence spans 339 residues: GTPase Obg (339 aa).

The 158-residue stretch at Met-1–Met-158 folds into the Obg domain. 2 disordered regions span residues Phe-66–Lys-86 and Gly-125–Glu-148. Positions Pro-72 to Lys-86 are enriched in basic and acidic residues. Residues Phe-129 to Arg-138 are compositionally biased toward polar residues. In terms of domain architecture, OBG-type G spans Ala-159–His-329. Residues Gly-165–Ser-172, Phe-190–Thr-194, Asp-212–Gly-215, Ser-279–Asp-282, and Ser-310–Val-312 contribute to the GTP site. The Mg(2+) site is built by Ser-172 and Thr-192.

It belongs to the TRAFAC class OBG-HflX-like GTPase superfamily. OBG GTPase family. In terms of assembly, monomer. The cofactor is Mg(2+).

It localises to the cytoplasm. An essential GTPase which binds GTP, GDP and possibly (p)ppGpp with moderate affinity, with high nucleotide exchange rates and a fairly low GTP hydrolysis rate. Plays a role in control of the cell cycle, stress response, ribosome biogenesis and in those bacteria that undergo differentiation, in morphogenesis control. The sequence is that of GTPase Obg from Salinibacter ruber (strain DSM 13855 / M31).